Here is a 504-residue protein sequence, read N- to C-terminus: MAGEEGEDEAASIELQLEHHLQEQRASLTAVDEALAADPSNADLLEVHEELLAAIKDAEEGLLHLKRSRLVKQIDEIFPNQEPTSEAPEVAVDPPDDVEPEPLEPQEFSVGSKCRFRHKDGRWYNGCVIGLEGSSDARISFLTPTSENMSMCKFFLQQRCRFGSNCRLSHGIVIPILSLKQFTPTRWQQSLVGSSILAASGHHSGLWRRAELESWDDDLKVGQVVFQDDGSSARLPSDSLSISEYADESDEDGEGSSSDEGSDFSEDGDQEDESVHQGLGLLESKNLSGVQTETAIFAKWEHHTRGVASKMMAKMGYREGMGLGVSGQGMLDPIPVKVLPPKQSLDHAVAASEVNDSVGPGKKRSRGGKRKREKKFAEQARAAKAEEEERSVFSFINSQLVGQDVAEGSAVKSKKDSSGEANGHAKKEDRRSLLAYDDEVKELRSRVEKLEEMMKRNRKDKAFYEAASKKLKQTRKALADAEATHASATNAVARKEKEKKWLKF.

Residues 40-69 are a coiled coil; that stretch reads SNADLLEVHEELLAAIKDAEEGLLHLKRSR. The disordered stretch occupies residues 77 to 105; that stretch reads IFPNQEPTSEAPEVAVDPPDDVEPEPLEP. A compositionally biased stretch (acidic residues) spans 94 to 104; it reads PPDDVEPEPLE. The C3H1-type zinc finger occupies 146–173; that stretch reads SENMSMCKFFLQQRCRFGSNCRLSHGIV. The disordered stretch occupies residues 230 to 276; that stretch reads GSSARLPSDSLSISEYADESDEDGEGSSSDEGSDFSEDGDQEDESVH. 2 stretches are compositionally biased toward acidic residues: residues 245 to 254 and 260 to 272; these read YADESDEDGE and EGSDFSEDGDQED. The 47-residue stretch at 304–350 folds into the G-patch domain; the sequence is TRGVASKMMAKMGYREGMGLGVSGQGMLDPIPVKVLPPKQSLDHAVA. Disordered regions lie at residues 351 to 390, 406 to 432, and 482 to 504; these read ASEVNDSVGPGKKRSRGGKRKREKKFAEQARAAKAEEEER, AEGSAVKSKKDSSGEANGHAKKEDRRS, and EATHASATNAVARKEKEKKWLKF. Residues 361–374 are compositionally biased toward basic residues; that stretch reads GKKRSRGGKRKREK. 3 stretches are compositionally biased toward basic and acidic residues: residues 375–390, 413–432, and 493–504; these read KFAEQARAAKAEEEER, SKKDSSGEANGHAKKEDRRS, and ARKEKEKKWLKF. Positions 430–500 form a coiled coil; that stretch reads RRSLLAYDDE…AVARKEKEKK (71 aa).

This Oryza sativa subsp. japonica (Rice) protein is Zinc finger CCCH domain-containing protein 18.